The following is a 281-amino-acid chain: 18S rRNA (guanine-N(7))-methyltransferase (281 aa).

The segment at 256 to 281 (KARRRRQGKEVCPDTQYTGRKRKPRF) is disordered.

This sequence belongs to the class I-like SAM-binding methyltransferase superfamily. BUD23/WBSCR22 family. As to quaternary structure, heterodimer with TRMT112; this heterodimerization is necessary for the metabolic stability and activity of the catalytic subunit BUD23. Interacts with GRIP1. In terms of processing, may be ubiquitinated and targeted to degradation in response to pro-inflammatory cytokine signaling.

The protein localises to the nucleus. It localises to the nucleoplasm. Its subcellular location is the cytoplasm. The protein resides in the perinuclear region. It catalyses the reaction a guanosine in 18S rRNA + S-adenosyl-L-methionine = an N(7)-methylguanosine in 18S rRNA + S-adenosyl-L-homocysteine. Its function is as follows. S-adenosyl-L-methionine-dependent methyltransferase that specifically methylates the N(7) position of a guanine in 18S rRNA. Requires the methyltransferase adapter protein TRM112 for full rRNA methyltransferase activity. Involved in the pre-rRNA processing steps leading to small-subunit rRNA production independently of its RNA-modifying catalytic activity. Important for biogenesis end export of the 40S ribosomal subunit independent on its methyltransferase activity. Locus-specific steroid receptor coactivator. Potentiates transactivation by glucocorticoid (NR3C1), mineralocorticoid (NR3C2), androgen (AR) and progesterone (PGR) receptors. Required for the maintenance of open chromatin at the TSC22D3/GILZ locus to facilitate NR3C1 loading on the response elements. Required for maintenance of dimethylation on histone H3 'Lys-79' (H3K79me2), although direct histone methyltransferase activity is not observed in vitro. The protein is 18S rRNA (guanine-N(7))-methyltransferase of Bos taurus (Bovine).